The sequence spans 129 residues: DCPSGWSSYEGHCYKPFKLYKTWDDAERFCTEQAKGGHLVSIESAGEADFVAQLVTENIQNTKSYVWIGLRVQGKEKQCSSEWSDGSSVSYENWIEAESKTCLGLEKETGFRKWVNIYCGQQNPFVCEA.

Residues 1–129 (DCPSGWSSYE…GQQNPFVCEA (129 aa)) enclose the C-type lectin domain. Disulfide bonds link Cys2–Cys13, Cys30–Cys127, and Cys102–Cys119. Ca(2+) contacts are provided by Ser41, Glu43, and Glu47. Ca(2+) is bound at residue Glu128.

The protein belongs to the snaclec family. In terms of assembly, heterodimer of subunits A and B; disulfide-linked. In terms of tissue distribution, expressed by the venom gland.

It is found in the secreted. In terms of biological role, anticoagulant protein which binds to the gamma-carboxyglutamic acid-domain regions of factor IX (F9) (but not factor X) in the presence of calcium with a 1 to 1 stoichiometry. This Protobothrops flavoviridis (Habu) protein is Snaclec coagulation factor IX-binding protein subunit A.